A 70-amino-acid chain; its full sequence is Exodeoxyribonuclease 7 small subunit (70 aa).

Belongs to the XseB family. As to quaternary structure, heterooligomer composed of large and small subunits.

The protein localises to the cytoplasm. It carries out the reaction Exonucleolytic cleavage in either 5'- to 3'- or 3'- to 5'-direction to yield nucleoside 5'-phosphates.. In terms of biological role, bidirectionally degrades single-stranded DNA into large acid-insoluble oligonucleotides, which are then degraded further into small acid-soluble oligonucleotides. This Streptococcus pneumoniae serotype 2 (strain D39 / NCTC 7466) protein is Exodeoxyribonuclease 7 small subunit.